The sequence spans 181 residues: Transcriptional repressor NrdR (181 aa).

A zinc finger lies at 3–34; that stretch reads CLFCQHTYTRVIDSRVSEDGATIRRRRECEAC. The 91-residue stretch at 49 to 139 folds into the ATP-cone domain; sequence PVIIKKDGGR…VYRSFQDVAD (91 aa).

The protein belongs to the NrdR family. Zn(2+) serves as cofactor.

Negatively regulates transcription of bacterial ribonucleotide reductase nrd genes and operons by binding to NrdR-boxes. In Xylella fastidiosa (strain 9a5c), this protein is Transcriptional repressor NrdR.